The sequence spans 285 residues: GPN-loop GTPase 3 (285 aa).

Position 13-18 (G13–T18) interacts with GTP. The Gly-Pro-Asn (GPN)-loop; involved in dimer interface motif lies at G72–N74. A GTP-binding site is contributed by T174–D177. Residues K261–P285 form a disordered region. The span at E265–F277 shows a compositional bias: acidic residues.

It belongs to the GPN-loop GTPase family. In terms of assembly, heterodimer with gpn1. Binds to RNA polymerase II (RNAPII).

Small GTPase required for proper localization of RNA polymerase II (RNAPII). May act at an RNAP assembly step prior to nuclear import. The sequence is that of GPN-loop GTPase 3 from Xenopus tropicalis (Western clawed frog).